The primary structure comprises 678 residues: MRTVVLTMKASVIEMFLVLLVTGVHSNKETAKKIKRPKFTVPQINCDVKAGKIIDPEFIVKCPAGCQDPKYHVYGTDVYASYSSVCGAAVHSGVLDNSGGKILVRKVAGQSGYKGSYSNGVQSLSLPRWRESFIVLESKPKKGVTYPSALTYSSSKSPAAQAGETTKAYQRPPIPGTTAQPVTLMQLLAVTVAVATPTTLPRPSPSAASTTSIPRPQSVGHRSQEMDLWSTATYTSSQNRPRADPGIQRQDPSGAAFQKPVGADVSLGLVPKEELSTQSLEPVSLGDPNCKIDLSFLIDGSTSIGKRRFRIQKQLLADVAQALDIGPAGPLMGVVQYGDNPATHFNLKTHTNSRDLKTAIEKITQRGGLSNVGRAISFVTKNFFSKANGNRSGAPNVVVVMVDGWPTDKVEEASRLARESGINIFFITIEGAAENEKQYVVEPNFANKAVCRTNGFYSLHVQSWFGLHKTLQPLVKRVCDTDRLACSKTCLNSADIGFVIDGSSSVGTGNFRTVLQFVTNLTKEFEISDTDTRIGAVQYTYEQRLEFGFDKYSSKPDILNAIKRVGYWSGGTSTGAAINFALEQLFKKSKPNKRKLMILITDGRSYDDVRIPAMAAHLKGVITYAIGVAWAAQEELEVIATHPARDHSFFVDEFDNLHQYVPRIIQNICTEFNSQPRN.

Positions 1–26 (MRTVVLTMKASVIEMFLVLLVTGVHS) are cleaved as a signal peptide. The 94-residue stretch at 40–133 (TVPQINCDVK…LSLPRWRESF (94 aa)) folds into the LCCL domain. Cystine bridges form between C46–C62 and C66–C86. Positions 154-168 (SSKSPAAQAGETTKA) are enriched in polar residues. Disordered regions lie at residues 154-177 (SSKS…IPGT) and 199-257 (TLPR…GAAF). Positions 199–216 (TLPRPSPSAASTTSIPRP) are enriched in low complexity. A compositionally biased stretch (polar residues) spans 230 to 240 (STATYTSSQNR). VWFA domains are found at residues 293 to 478 (DLSF…VKRV) and 495 to 668 (DIGF…IQNI). 2 N-linked (GlcNAc...) asparagine glycosylation sites follow: N390 and N520.

As to quaternary structure, binds dermatan sulfate and chondroitin sulfate.

Its subcellular location is the secreted. The protein resides in the extracellular space. It is found in the extracellular matrix. Promotes matrix assembly and cell adhesiveness. Plays a role in spinal cord formation by regulating the proliferation and differentiation of neural stem cells. This Homo sapiens (Human) protein is Vitrin (VIT).